A 204-amino-acid polypeptide reads, in one-letter code: Imidazole glycerol phosphate synthase subunit HisH (204 aa).

The region spanning 1-204 (MIKIVDYGLG…MTLLKNFSEI (204 aa)) is the Glutamine amidotransferase type-1 domain. Cysteine 80 acts as the Nucleophile in catalysis. Active-site residues include histidine 186 and glutamate 188.

In terms of assembly, heterodimer of HisH and HisF.

It localises to the cytoplasm. The catalysed reaction is 5-[(5-phospho-1-deoxy-D-ribulos-1-ylimino)methylamino]-1-(5-phospho-beta-D-ribosyl)imidazole-4-carboxamide + L-glutamine = D-erythro-1-(imidazol-4-yl)glycerol 3-phosphate + 5-amino-1-(5-phospho-beta-D-ribosyl)imidazole-4-carboxamide + L-glutamate + H(+). It catalyses the reaction L-glutamine + H2O = L-glutamate + NH4(+). The protein operates within amino-acid biosynthesis; L-histidine biosynthesis; L-histidine from 5-phospho-alpha-D-ribose 1-diphosphate: step 5/9. IGPS catalyzes the conversion of PRFAR and glutamine to IGP, AICAR and glutamate. The HisH subunit catalyzes the hydrolysis of glutamine to glutamate and ammonia as part of the synthesis of IGP and AICAR. The resulting ammonia molecule is channeled to the active site of HisF. The polypeptide is Imidazole glycerol phosphate synthase subunit HisH (Bdellovibrio bacteriovorus (strain ATCC 15356 / DSM 50701 / NCIMB 9529 / HD100)).